Consider the following 182-residue polypeptide: Large ribosomal subunit protein uL6 (182 aa).

It belongs to the universal ribosomal protein uL6 family. Part of the 50S ribosomal subunit.

Its function is as follows. This protein binds to the 23S rRNA, and is important in its secondary structure. It is located near the subunit interface in the base of the L7/L12 stalk, and near the tRNA binding site of the peptidyltransferase center. In Methanocaldococcus jannaschii (strain ATCC 43067 / DSM 2661 / JAL-1 / JCM 10045 / NBRC 100440) (Methanococcus jannaschii), this protein is Large ribosomal subunit protein uL6.